We begin with the raw amino-acid sequence, 466 residues long: Vimentin (466 aa).

Composition is skewed to low complexity over residues 1-13 and 20-31; these read MSTRTVSSSSYRR and TASRPSSSRSYV. Positions 1-31 are disordered; sequence MSTRTVSSSSYRRMFGGPGTASRPSSSRSYV. Ser2 bears the N-acetylserine mark. The tract at residues 2-95 is head; sequence STRTVSSSSY…FSLADAINTE (94 aa). The residue at position 7 (Ser7) is a Phosphoserine; alternate. Ser7 is a glycosylation site (O-linked (GlcNAc) serine; alternate). Phosphoserine is present on residues Ser8, Ser9, and Ser10. A Phosphothreonine modification is found at Thr20. Phosphoserine is present on residues Ser25 and Ser26. A glycan (O-linked (GlcNAc) threonine) is linked at Thr33. The O-linked (GlcNAc) serine; alternate glycan is linked to Ser34. The residue at position 34 (Ser34) is a Phosphoserine; by PKC; alternate. Position 39 is a phosphoserine; by CaMK2, PKA, PKC and ROCK2 (Ser39). Ser42, Ser47, Ser49, and Ser51 each carry phosphoserine. Residue Tyr53 is modified to Phosphotyrosine. At Ser55 the chain carries Phosphoserine. Ser56 bears the Phosphoserine; by CDK5 and CDK1 mark. A Phosphotyrosine modification is found at Tyr61. A Phosphoserine modification is found at Ser66. At Ser72 the chain carries Phosphoserine; by AURKB and ROCK2. Residues Ser73 and Ser87 each carry the phosphoserine modification. Residues 96 to 131 are coil 1A; sequence FKNTRTNEKVELQELNDRFANYIDKVRFLEQQNKIL. A coiled-coil region spans residues 96–131; it reads FKNTRTNEKVELQELNDRFANYIDKVRFLEQQNKIL. Positions 103 to 411 constitute an IF rod domain; the sequence is EKVELQELND…KLLEGEESRI (309 aa). A Glycyl lysine isopeptide (Lys-Gly) (interchain with G-Cter in SUMO2) cross-link involves residue Lys104. Position 117 is a phosphotyrosine (Tyr117). 3 positions are modified to N6-acetyllysine; alternate: Lys120, Lys129, and Lys139. 2 positions are modified to N6-succinyllysine; alternate: Lys120 and Lys129. Residues Lys120, Lys129, and Lys139 each participate in a glycyl lysine isopeptide (Lys-Gly) (interchain with G-Cter in SUMO2); alternate cross-link. Positions 132-153 are linker 1; that stretch reads LAELEQLKGQGKSRLGDLYEEE. The residue at position 144 (Ser144) is a Phosphoserine. Positions 154-245 form a coiled coil; sequence MRELRRQVDQ…KLHDEEIQEL (92 aa). Residues 154–245 form a coil 1B region; it reads MRELRRQVDQ…KLHDEEIQEL (92 aa). At Lys168 the chain carries N6-acetyllysine. Position 188 is an N6-acetyllysine; alternate (Lys188). Position 188 is an N6-succinyllysine; alternate (Lys188). Phosphoserine is present on Ser214. Position 223 is an N6-acetyllysine; alternate (Lys223). Lys223 participates in a covalent cross-link: Glycyl lysine isopeptide (Lys-Gly) (interchain with G-Cter in SUMO2); alternate. Ser226 carries the post-translational modification Phosphoserine. Lys235 carries the post-translational modification N6-acetyllysine. The interval 246–268 is linker 12; it reads QAQIQEQHVQIDMDVSKPDLTAA. Lys262 participates in a covalent cross-link: Glycyl lysine isopeptide (Lys-Gly) (interchain with G-Cter in SUMO2). The segment at 269–407 is coil 2; it reads LRDVRQQYES…ATYRKLLEGE (139 aa). Lys294 is modified (N6-acetyllysine; alternate). Residue Lys294 is modified to N6-succinyllysine; alternate. Residue Lys294 forms a Glycyl lysine isopeptide (Lys-Gly) (interchain with G-Cter in SUMO2); alternate linkage. The residue at position 299 (Ser299) is a Phosphoserine. A coiled-coil region spans residues 303–407; it reads NRNNDALRQA…ATYRKLLEGE (105 aa). Lys313 is covalently cross-linked (Glycyl lysine isopeptide (Lys-Gly) (interchain with G-Cter in SUMO2)). Position 325 is a phosphoserine (Ser325). Positions 326–329 match the [IL]-x-C-x-x-[DE] motif motif; it reads LTCE. Residue Lys373 is modified to N6-acetyllysine; alternate. A Glycyl lysine isopeptide (Lys-Gly) (interchain with G-Cter in SUMO2); alternate cross-link involves residue Lys373. Residues 408–466 form a tail region; sequence ESRISLPLPNFSSLNLRETNLESLPLVDTHSKRTLLIKTVETRDGQVINETSQHHDDLE. Ser409, Ser412, Ser419, and Ser420 each carry phosphoserine. Thr426 is modified (phosphothreonine). Ser430 carries the phosphoserine modification. A Phosphothreonine modification is found at Thr436. Phosphoserine is present on Ser438. Residue Lys439 forms a Glycyl lysine isopeptide (Lys-Gly) (interchain with G-Cter in SUMO2) linkage. Lys445 bears the N6-acetyllysine; alternate mark. An N6-succinyllysine; alternate modification is found at Lys445. Lys445 participates in a covalent cross-link: Glycyl lysine isopeptide (Lys-Gly) (interchain with G-Cter in SUMO2); alternate. Lys445 is covalently cross-linked (Glycyl lysine isopeptide (Lys-Gly) (interchain with G-Cter in SUMO1); alternate). Phosphothreonine is present on residues Thr446 and Thr458. Ser459 is modified (phosphoserine).

This sequence belongs to the intermediate filament family. Homomer assembled from elementary dimers. Identified in complexes that contain VIM, EZR, AHNAK, BFSP1, BFSP2, ANK2, PLEC, PRX and spectrin. Interacts with BCAS3. Interacts with LGSN. Interacts with SYNM. Interacts (via rod region) with PLEC (via CH 1 domain). Interacts with STK33. Interacts with LARP6. Interacts with RAB8B. Interacts with TOR1A; the interaction associates TOR1A with the cytoskeleton. Interacts with TOR1AIP1. Interacts with TOR1AIP1. Interacts with DIAPH1. Interacts with EPPK1; interaction is dependent of higher-order structure of intermediate filament. Interacts with the non-receptor tyrosine kinase SRMS; the interaction leads to phosphorylation of VIM. Interacts with NOD2. Interacts (via head region) with CORO1C. Interacts with HDGF. Interacts with PRKCE (via phorbol-ester/DAG-type 2 domain). Interacts with BFSP2. Interacts with PPL. Interacts with PKP1 and PKP2. Interacts with SCRIB (via PDZ domains); the interaction protects SCRIB from proteasomal degradation and facilitates SCRIB localization to intermediate filaments, the interaction is reduced by cell contact inhibition. In terms of processing, one of the most prominent phosphoproteins in various cells of mesenchymal origin. Phosphorylation is enhanced during cell division, at which time vimentin filaments are significantly reorganized. Phosphorylation by PKN1 inhibits the formation of filaments. Filament disassembly during mitosis is promoted by phosphorylation at Ser-55 as well as by nestin. Phosphorylated at Ser-56 by CDK5 during neutrophil secretion in the cytoplasm. Phosphorylated by STK33. Phosphorylated on tyrosine residues by SRMS. Post-translationally, S-nitrosylation is induced by interferon-gamma and oxidatively-modified low-densitity lipoprotein (LDL(ox)) possibly implicating the iNOS-S100A8/9 transnitrosylase complex.

The protein resides in the cytoplasm. It is found in the cytoskeleton. Its subcellular location is the nucleus matrix. The protein localises to the cell membrane. Its function is as follows. Vimentins are class-III intermediate filaments found in various non-epithelial cells, especially mesenchymal cells. Vimentin is attached to the nucleus, endoplasmic reticulum, and mitochondria, either laterally or terminally. Plays a role in cell directional movement, orientation, cell sheet organization and Golgi complex polarization at the cell migration front. Protects SCRIB from proteasomal degradation and facilitates its localization to intermediate filaments in a cell contact-mediated manner. In terms of biological role, involved with LARP6 in the stabilization of type I collagen mRNAs for CO1A1 and CO1A2. The protein is Vimentin (VIM) of Sus scrofa (Pig).